A 452-amino-acid polypeptide reads, in one-letter code: Mitochondrial distribution and morphology protein 34 (452 aa).

The region spanning 1–196 (MSFRVKGWSD…LPSIIYKMSR (196 aa)) is the SMP-LTD domain.

The protein belongs to the MDM34 family. In terms of assembly, component of the ER-mitochondria encounter structure (ERMES) or MDM complex, composed of mmm1, mdm10, mdm12 and mdm34.

It is found in the mitochondrion outer membrane. In terms of biological role, component of the ERMES/MDM complex, which serves as a molecular tether to connect the endoplasmic reticulum (ER) and mitochondria. Components of this complex are involved in the control of mitochondrial shape and protein biogenesis, and function in nonvesicular lipid trafficking between the ER and mitochondria. Mdm34 is required for the interaction of the ER-resident membrane protein mmm1 and the outer mitochondrial membrane-resident beta-barrel protein mdm10. In Schizosaccharomyces pombe (strain 972 / ATCC 24843) (Fission yeast), this protein is Mitochondrial distribution and morphology protein 34.